Consider the following 5065-residue polypeptide: Dynein heavy chain-like protein 1 (5065 aa).

The stem stretch occupies residues 1 to 1957 (MELEKTHLIN…IIKMADATFE (1957 aa)). Residues 1677-1705 (QMEGFQKQLDRLSDSLSKIQKALGEYLEK) adopt a coiled-coil conformation. Residues 1958 to 2179 (YGYEYLGMCE…LRSLKSVLNS (222 aa)) form an AAA 1 region. Residue 1996–2003 (GPAGTGKT) coordinates ATP. Positions 2203-2223 (FNETLDNNNNNDNNNERKTTT) are disordered. Positions 2204–2215 (NETLDNNNNNDN) are enriched in low complexity. 3 AAA regions span residues 2281–2632 (NEIH…YEYI), 2751–3004 (DVDR…WKLA), and 3097–3367 (IFNE…GNRY). 2319 to 2326 (GDVGTGKS) contacts ATP. Positions 2507-2529 (EKNQNGNENGNENEKKNINIINN) are disordered. Residues 2790 to 2797 (GPPGSGKT) and 3135 to 3142 (GASGAGKT) each bind ATP. The segment at 3386–3701 (IDEKKEEVSS…ETFINLEEAS (316 aa)) is stalk. Coiled coils occupy residues 3388-3466 (EKKE…LDEQ) and 3970-3997 (TMEK…EVEN). AAA stretches follow at residues 3754–3983 (LSRP…EASK) and 4289–4507 (FNKI…VVDS). Residues 4686–4705 (KDKNKDEDKNKNKENDDNNK) are compositionally biased toward basic and acidic residues. The segment at 4686–4727 (KDKNKDEDKNKNKENDDNNKKHIGNNKLVISSSERTESETSE) is disordered.

This sequence belongs to the dynein heavy chain family. In terms of assembly, consists of at least two heavy chains and a number of intermediate and light chains.

It localises to the cytoplasm. The protein localises to the cytoskeleton. Its function is as follows. Acts as a motor for the intracellular retrograde motility of vesicles and organelles along microtubules. Dynein has ATPase activity; the force-producing power stroke is thought to occur on release of ADP. The sequence is that of Dynein heavy chain-like protein 1 from Plasmodium falciparum (isolate 3D7).